The following is a 505-amino-acid chain: Maturase K (505 aa).

Belongs to the intron maturase 2 family. MatK subfamily.

It is found in the plastid. The protein localises to the chloroplast. Functionally, usually encoded in the trnK tRNA gene intron. Probably assists in splicing its own and other chloroplast group II introns. This is Maturase K from Dioon edule (Virgin's palm).